The sequence spans 275 residues: Nuclear egress protein 2 (275 aa).

Residues 1–251 (MDSYNYRDFA…SERVKRRPVR (251 aa)) are Perinuclear space-facing. A disordered region spans residues 197-221 (CDRSNGIVSPREHRECRERQKRRPT). A helical transmembrane segment spans residues 252 to 272 (IAAAILAFVFVAVILAIATKG). Residues 273–275 (RLF) are Nuclear-facing.

This sequence belongs to the herpesviridae NEC2 protein family. As to quaternary structure, forms a heterohexameric complex with NEC1. Post-translationally, phosphorylated.

Its subcellular location is the host nucleus inner membrane. Functionally, plays an essential role in virion nuclear egress, the first step of virion release from infected cell. Within the host nucleus, NEC1 interacts with the newly formed capsid through the vertexes and directs it to the inner nuclear membrane by associating with NEC2. Induces the budding of the capsid at the inner nuclear membrane as well as its envelopment into the perinuclear space. There, the NEC1/NEC2 complex promotes the fusion of the enveloped capsid with the outer nuclear membrane and the subsequent release of the viral capsid into the cytoplasm where it will reach the secondary budding sites in the host Golgi or trans-Golgi network. This chain is Nuclear egress protein 2, found in Equus caballus (Horse).